The chain runs to 259 residues: 3-deoxy-manno-octulosonate cytidylyltransferase (259 aa).

The protein belongs to the KdsB family.

It localises to the cytoplasm. It catalyses the reaction 3-deoxy-alpha-D-manno-oct-2-ulosonate + CTP = CMP-3-deoxy-beta-D-manno-octulosonate + diphosphate. Its pathway is nucleotide-sugar biosynthesis; CMP-3-deoxy-D-manno-octulosonate biosynthesis; CMP-3-deoxy-D-manno-octulosonate from 3-deoxy-D-manno-octulosonate and CTP: step 1/1. The protein operates within bacterial outer membrane biogenesis; lipopolysaccharide biosynthesis. Its function is as follows. Activates KDO (a required 8-carbon sugar) for incorporation into bacterial lipopolysaccharide in Gram-negative bacteria. This Maricaulis maris (strain MCS10) (Caulobacter maris) protein is 3-deoxy-manno-octulosonate cytidylyltransferase.